Reading from the N-terminus, the 225-residue chain is Octanoyltransferase (225 aa).

Residues 37 to 217 enclose the BPL/LPL catalytic domain; sequence SDTPDEFWVV…ELASLIGYQT (181 aa). Residues 76 to 83, 148 to 150, and 161 to 163 contribute to the substrate site; these read RGGQVTYH, SLG, and GLA. Catalysis depends on cysteine 179, which acts as the Acyl-thioester intermediate.

The protein belongs to the LipB family.

It is found in the cytoplasm. The enzyme catalyses octanoyl-[ACP] + L-lysyl-[protein] = N(6)-octanoyl-L-lysyl-[protein] + holo-[ACP] + H(+). Its pathway is protein modification; protein lipoylation via endogenous pathway; protein N(6)-(lipoyl)lysine from octanoyl-[acyl-carrier-protein]: step 1/2. Catalyzes the transfer of endogenously produced octanoic acid from octanoyl-acyl-carrier-protein onto the lipoyl domains of lipoate-dependent enzymes. Lipoyl-ACP can also act as a substrate although octanoyl-ACP is likely to be the physiological substrate. In Aeromonas salmonicida (strain A449), this protein is Octanoyltransferase.